The sequence spans 223 residues: Killer cell lectin-like receptor subfamily B member 1B allele A (223 aa).

At 1 to 43 (MDSTTLVYADLNLARIQEPKHDSPPSLSPDTCRCPRWHRLALK) the chain is on the cytoplasmic side. An ITIM motif motif is present at residues 6-11 (LVYADL). The short motif at 32-35 (CRCP) is the LCK-binding motif element. A helical; Signal-anchor for type II membrane protein membrane pass occupies residues 44–63 (FGCAGLILLVLVVIGLCVLV). At 64–223 (LSVQKSSVQK…LNHETPSNDS (160 aa)) the chain is on the extracellular side. One can recognise a C-type lectin domain in the interval 93-212 (ECPQDWLSHR…STDNRWICQK (120 aa)). Cystine bridges form between cysteine 122–cysteine 210 and cysteine 189–cysteine 202.

As to quaternary structure, homodimer; disulfide-linked. Interacts with tyrosine kinase LCK. Binds PTPN6/SHP-1 in a phosphorylation-dependent manner. Expressed in NK cells and a subset of T-cells.

The protein resides in the membrane. In terms of biological role, receptor for CLEC2D/OCIL. Ligand-binding contributes to inhibition of cytotoxic natural killer (NK) cells. May mediate MHC class I-independent 'missing-self' recognition of allografts, tumor cells and virus-infected cells. This is Killer cell lectin-like receptor subfamily B member 1B allele A (Klrb1b) from Mus musculus (Mouse).